Consider the following 597-residue polypeptide: DNA mismatch repair protein MutL (597 aa).

The protein belongs to the DNA mismatch repair MutL/HexB family.

In terms of biological role, this protein is involved in the repair of mismatches in DNA. It is required for dam-dependent methyl-directed DNA mismatch repair. May act as a 'molecular matchmaker', a protein that promotes the formation of a stable complex between two or more DNA-binding proteins in an ATP-dependent manner without itself being part of a final effector complex. This Rhodopseudomonas palustris (strain HaA2) protein is DNA mismatch repair protein MutL.